Here is a 174-residue protein sequence, read N- to C-terminus: MAASMARGVSARVLLRAAGGSWGPRAGHAAVTSRTFGTTGERRAGEEAADSPELPRDVVNVVFVDRSGKRIPVRGKVGDNVLYLAQRHGVDLEGACEASLACSTCHVYVSEAHLDLLPPPEEREDDMLDMAPLLQENSRLGCQIVLTPELEGVEFALPKITRNFYVDGHIPKPH.

The N-terminal 43 residues, 1 to 43 (MAASMARGVSARVLLRAAGGSWGPRAGHAAVTSRTFGTTGERR), are a transit peptide targeting the mitochondrion. The interval 26-52 (AGHAAVTSRTFGTTGERRAGEEAADSP) is disordered. Positions 59–161 (VNVVFVDRSG…GVEFALPKIT (103 aa)) constitute a 2Fe-2S ferredoxin-type domain. [2Fe-2S] cluster is bound by residues cysteine 96, cysteine 102, cysteine 105, and cysteine 142.

It belongs to the adrenodoxin/putidaredoxin family. Component of the mitochondrial core iron-sulfur cluster (ISC) complex composed of NFS1, LYRM4, NDUFAB1, ISCU, FXN, and FDX2; this complex is a heterohexamer containing two copies of each monomer. Form a heterodimer complex with NFS1. Interacts (in both their reduced and oxidized states) with the cysteine desulfurase (NFS1:LYRM4) complex; this interaction stimulates cysteine desulfurase activity, and serves as a reductant for Fe-S cluster assembly. Requires [2Fe-2S] cluster as cofactor.

It is found in the mitochondrion. Its subcellular location is the mitochondrion matrix. Electron donor, of the core iron-sulfur cluster (ISC) assembly complex, that acts to reduce the persulfide into sulfide during [2Fe-2S] clusters assembly on the scaffolding protein ISCU. The core iron-sulfur cluster (ISC) assembly complex is involved in the de novo synthesis of a [2Fe-2S] cluster, the first step of the mitochondrial iron-sulfur protein biogenesis. This process is initiated by the cysteine desulfurase complex (NFS1:LYRM4:NDUFAB1) that produces persulfide which is delivered on the scaffold protein ISCU in a FXN-dependent manner. Then this complex is stabilized by FDX2 which provides reducing equivalents to accomplish the [2Fe-2S] cluster assembly. Finally, the [2Fe-2S] cluster is transferred from ISCU to chaperone proteins, including HSCB, HSPA9 and GLRX5. Essential for coenzyme Q biosynthesis: together with FDXR, transfers the electrons required for the hydroxylation reaction performed by COQ6. The sequence is that of Ferredoxin-2, mitochondrial from Mus musculus (Mouse).